A 137-amino-acid chain; its full sequence is 2-iminobutanoate/2-iminopropanoate deaminase (137 aa).

Serine 2 is modified (N-acetylserine). Lysine 13, lysine 60, and lysine 67 each carry N6-succinyllysine. Residue threonine 74 is modified to Phosphothreonine. Serine 136 carries the post-translational modification Phosphoserine.

The protein belongs to the RutC family. As to quaternary structure, homotrimer. Interacts with YTHDF2. As to expression, expressed predominantly in liver and kidney. Lower levels in lung and brain.

The protein localises to the cytoplasm. Its subcellular location is the nucleus. It localises to the peroxisome. The protein resides in the mitochondrion. It catalyses the reaction 2-iminobutanoate + H2O = 2-oxobutanoate + NH4(+). The enzyme catalyses 2-iminopropanoate + H2O = pyruvate + NH4(+). Catalyzes the hydrolytic deamination of enamine/imine intermediates that form during the course of normal metabolism. May facilitate the release of ammonia from these potentially toxic reactive metabolites, reducing their impact on cellular components. It may act on enamine/imine intermediates formed by several types of pyridoxal-5'-phosphate-dependent dehydratases including L-threonine dehydratase. In terms of biological role, also promotes endoribonucleolytic cleavage of some transcripts by promoting recruitment of the ribonuclease P/MRP complex. Acts by bridging YTHDF2 and the ribonuclease P/MRP complex. RIDA/HRSP12 binds to N6-methyladenosine (m6A)-containing mRNAs containing a 5'-GGUUC-3' motif: cooperative binding of RIDA/HRSP12 and YTHDF2 to such transcripts lead to recruitment of the ribonuclease P/MRP complex and subsequent endoribonucleolytic cleavage. This chain is 2-iminobutanoate/2-iminopropanoate deaminase, found in Homo sapiens (Human).